The chain runs to 549 residues: Cytoplasmic trehalase (549 aa).

Substrate is bound by residues arginine 168, 175 to 176, asparagine 212, 221 to 223, 292 to 294, and glycine 324; these read WD, RSQ, and RDE. Residues aspartate 326 and glutamate 509 each act as proton donor/acceptor in the active site. Glutamate 525 is a substrate binding site.

This sequence belongs to the glycosyl hydrolase 37 family. In terms of assembly, monomer.

It localises to the cytoplasm. It carries out the reaction alpha,alpha-trehalose + H2O = alpha-D-glucose + beta-D-glucose. It functions in the pathway glycan degradation; trehalose degradation; D-glucose from alpha,alpha-trehalose: step 1/1. Hydrolyzes trehalose to glucose. Could be involved, in cells returning to low osmolarity conditions, in the utilization of the accumulated cytoplasmic trehalose, which was synthesized in response to high osmolarity. The polypeptide is Cytoplasmic trehalase (Salmonella schwarzengrund (strain CVM19633)).